A 484-amino-acid chain; its full sequence is Acetyl-coenzyme A carboxylase carboxyl transferase subunit beta, chloroplastic (484 aa).

The CoA carboxyltransferase N-terminal domain occupies 223-484 (LWIQCDNCYG…LHAFFPLNKN (262 aa)). Zn(2+) contacts are provided by cysteine 227, cysteine 230, cysteine 243, and cysteine 246. Residues 227-246 (CDNCYGLMYKKVKMNVCEQC) form a C4-type zinc finger.

It belongs to the AccD/PCCB family. As to quaternary structure, acetyl-CoA carboxylase is a heterohexamer composed of biotin carboxyl carrier protein, biotin carboxylase and 2 subunits each of ACCase subunit alpha and ACCase plastid-coded subunit beta (accD). Zn(2+) is required as a cofactor.

Its subcellular location is the plastid. It is found in the chloroplast stroma. It carries out the reaction N(6)-carboxybiotinyl-L-lysyl-[protein] + acetyl-CoA = N(6)-biotinyl-L-lysyl-[protein] + malonyl-CoA. Its pathway is lipid metabolism; malonyl-CoA biosynthesis; malonyl-CoA from acetyl-CoA: step 1/1. In terms of biological role, component of the acetyl coenzyme A carboxylase (ACC) complex. Biotin carboxylase (BC) catalyzes the carboxylation of biotin on its carrier protein (BCCP) and then the CO(2) group is transferred by the transcarboxylase to acetyl-CoA to form malonyl-CoA. The sequence is that of Acetyl-coenzyme A carboxylase carboxyl transferase subunit beta, chloroplastic from Olimarabidopsis pumila (Dwarf rocket).